A 376-amino-acid polypeptide reads, in one-letter code: Lipid-A-disaccharide synthase (376 aa).

The protein belongs to the LpxB family.

The enzyme catalyses a lipid X + a UDP-2-N,3-O-bis[(3R)-3-hydroxyacyl]-alpha-D-glucosamine = a lipid A disaccharide + UDP + H(+). The protein operates within bacterial outer membrane biogenesis; LPS lipid A biosynthesis. In terms of biological role, condensation of UDP-2,3-diacylglucosamine and 2,3-diacylglucosamine-1-phosphate to form lipid A disaccharide, a precursor of lipid A, a phosphorylated glycolipid that anchors the lipopolysaccharide to the outer membrane of the cell. In Coxiella burnetii (strain CbuK_Q154) (Coxiella burnetii (strain Q154)), this protein is Lipid-A-disaccharide synthase.